Here is a 516-residue protein sequence, read N- to C-terminus: Signal recognition particle protein (516 aa).

Residues 108-115 (GLQGAGKT), 191-195 (DTAGR), and 249-252 (TKID) each bind GTP. Residues 383–405 (MTPEERENPDLLTPSRRRRIASG) form a disordered region.

The protein belongs to the GTP-binding SRP family. SRP54 subfamily. Part of the signal recognition particle protein translocation system, which is composed of SRP and FtsY.

The protein resides in the cytoplasm. The catalysed reaction is GTP + H2O = GDP + phosphate + H(+). Involved in targeting and insertion of nascent membrane proteins into the cytoplasmic membrane. Binds to the hydrophobic signal sequence of the ribosome-nascent chain (RNC) as it emerges from the ribosomes. The SRP-RNC complex is then targeted to the cytoplasmic membrane where it interacts with the SRP receptor FtsY. The polypeptide is Signal recognition particle protein (Streptococcus mutans serotype c (strain ATCC 700610 / UA159)).